A 160-amino-acid chain; its full sequence is Iron-sulfur assembly protein IscA1 (160 aa).

This sequence belongs to the HesB/IscA family. In terms of assembly, tetramer.

The protein localises to the mitochondrion. The protein operates within cofactor biosynthesis; iron-sulfur cluster biosynthesis. Participates in iron-sulfur cluster formation (ISC) pathway for iron-sulfur (Fe-S) cluster biogenesis. Can bind iron and [4Fe-4S] clusters. May function as an iron chaperone. The sequence is that of Iron-sulfur assembly protein IscA1 from Plasmodium falciparum (isolate 3D7).